The following is a 764-amino-acid chain: Metabotropic glutamate receptor-like protein H (764 aa).

Positions 1–20 (MKNILKILILILICINKINC) are cleaved as a signal peptide. Over 21 to 393 (LDGDGKQFRM…EVEFSQSIQN (373 aa)) the chain is Extracellular. 5 N-linked (GlcNAc...) asparagine glycosylation sites follow: Asn-72, Asn-260, Asn-278, Asn-344, and Asn-379. Residues 394 to 414 (GFSITTGILIGITILMMIGII) traverse the membrane as a helical segment. Topologically, residues 415-427 (KYSKTPSMRSASP) are cytoplasmic. The chain crosses the membrane as a helical span at residues 428 to 448 (IFLNFILAGGIIVYIGIIVWV). Residues 449-464 (GPMSTHSCNARLWLVT) lie on the Extracellular side of the membrane. A helical membrane pass occupies residues 465–485 (LGFSTLIGSLVVKNFRIWLIF). The Cytoplasmic segment spans residues 486–500 (DNPELKSIKITNYQL). Residues 501-521 (FPWVGACLVINIILMAILTSV) form a helical membrane-spanning segment. Residues 522–552 (GDLKQIDAMNIDSLGKYEYMKVCKMNSSGAS) are Extracellular-facing. Asn-547 carries N-linked (GlcNAc...) asparagine glycosylation. The chain crosses the membrane as a helical span at residues 553–573 (TLYTILAYFAALLLVGVFVSW). At 574 to 587 (KIRIVDILEFNESG) the chain is on the cytoplasmic side. The chain crosses the membrane as a helical span at residues 588–608 (AIANTLYAISFCLFVIVPLMI). Residues 609 to 617 (SPQDMQSET) are Extracellular-facing. Residues 618 to 638 (IILCTTGLFITTAALLIIFIP) traverse the membrane as a helical segment. The Cytoplasmic segment spans residues 639–764 (KFWRVFRKGA…IIVNDSENNN (126 aa)). Positions 664–764 (ATARAESGSK…IIVNDSENNN (101 aa)) are disordered. The segment covering 671–690 (GSKGSNGNASSGNRTNRRGN) has biased composition (low complexity). Basic and acidic residues predominate over residues 707-719 (ENQKEKEKIKDDV). Positions 731–748 (FTDEASDTDNNEFNDIEL) are enriched in acidic residues.

In the N-terminal section; belongs to the BMP lipoprotein family. The protein in the C-terminal section; belongs to the G-protein coupled receptor 3 family. GABA-B receptor subfamily.

The protein resides in the membrane. This Dictyostelium discoideum (Social amoeba) protein is Metabotropic glutamate receptor-like protein H (grlH).